The chain runs to 667 residues: E3 ubiquitin-protein ligase RNF6 (667 aa).

Disordered regions lie at residues 1-25 (MDPSRSRSGGSGEESSFQENERRWQ), 75-100 (KEQLASQPGSDSAASDGDSESLRAHS), 116-216 (GNVT…QGSF), 295-355 (FSSR…TPLS), 396-419 (ETRDRDSIANRTRSRAGLAESTVE), 507-532 (GDAADDSGQHGRASSQASQAQDGAEM), and 537-556 (EPAPPQARPSGSRSRRQLGR). Positions 79–90 (ASQPGSDSAASD) are enriched in low complexity. Residues 116–139 (GNVTRSGQNGNQSWRAVSRTNPNS) show a composition bias toward polar residues. Residues 150–163 (INPDNRGSEMHGED) show a composition bias toward basic and acidic residues. Over residues 191–200 (SQTSMSSSGP) the composition is skewed to low complexity. A compositionally biased stretch (polar residues) spans 296–327 (SSRSRSPIQRQNGTVHHNSQRQGRPVQQTGRN). Over residues 516-530 (HGRASSQASQAQDGA) the composition is skewed to low complexity. Phosphoserine is present on Ser-559. Residues 614-655 (CSVCISDYVAGNKLRQLPCLHEFHIHCIDRWLSENCTCPVCR) form an RING-type; atypical zinc finger.

This sequence belongs to the RNF12 family. Widely expressed with higher expression in the testis in both germ cells and Sertoli cells.

The protein localises to the nucleus. It is found in the cytoplasm. The protein resides in the cell projection. Its subcellular location is the axon. It localises to the PML body. It catalyses the reaction S-ubiquitinyl-[E2 ubiquitin-conjugating enzyme]-L-cysteine + [acceptor protein]-L-lysine = [E2 ubiquitin-conjugating enzyme]-L-cysteine + N(6)-ubiquitinyl-[acceptor protein]-L-lysine.. The protein operates within protein modification; protein ubiquitination. Its function is as follows. E3 ubiquitin-protein ligase mediating 'Lys-48'-linked polyubiquitination of LIMK1 and its subsequent targeting to the proteasome for degradation. Negatively regulates axonal outgrowth through regulation of the LIMK1 turnover. Mediates 'Lys-6' and 'Lys-27'-linked polyubiquitination of AR/androgen receptor thereby modulating its transcriptional activity. May also bind DNA and function as a transcriptional regulator. Mediates polyubiquitination of QKI in macrophages, leading to its degradation. This chain is E3 ubiquitin-protein ligase RNF6, found in Mus musculus (Mouse).